A 347-amino-acid polypeptide reads, in one-letter code: L-threonine 3-dehydrogenase (347 aa).

A Zn(2+)-binding site is contributed by cysteine 42. Residues threonine 44 and histidine 47 each act as charge relay system in the active site. 6 residues coordinate Zn(2+): histidine 67, glutamate 68, cysteine 97, cysteine 100, cysteine 103, and cysteine 111. NAD(+) is bound by residues isoleucine 180, aspartate 200, arginine 205, 267-269 (LSL), and 292-293 (IT).

This sequence belongs to the zinc-containing alcohol dehydrogenase family. Homotetramer. Requires Zn(2+) as cofactor.

Its subcellular location is the cytoplasm. The catalysed reaction is L-threonine + NAD(+) = (2S)-2-amino-3-oxobutanoate + NADH + H(+). It participates in amino-acid degradation; L-threonine degradation via oxydo-reductase pathway; glycine from L-threonine: step 1/2. In terms of biological role, catalyzes the NAD(+)-dependent oxidation of L-threonine to 2-amino-3-ketobutyrate. The chain is L-threonine 3-dehydrogenase from Bacillus velezensis (strain DSM 23117 / BGSC 10A6 / LMG 26770 / FZB42) (Bacillus amyloliquefaciens subsp. plantarum).